Consider the following 145-residue polypeptide: Small ribosomal subunit protein eS19 (145 aa).

K23 carries the N6-acetyllysine modification. The residue at position 67 (R67) is an Omega-N-methylarginine. An N6-acetyllysine mark is found at K111 and K115. The residue at position 143 (K143) is an N6-succinyllysine.

It belongs to the eukaryotic ribosomal protein eS19 family. In terms of assembly, component of the small ribosomal subunit. Part of the small subunit (SSU) processome, composed of more than 70 proteins and the RNA chaperone small nucleolar RNA (snoRNA) U3. Interacts with RPS19BP1; the interaction is direct and mediates the integration of RPS19 in state post-A1. Interacts with RPS19BP1.

Its subcellular location is the cytoplasm. The protein resides in the nucleus. It is found in the nucleolus. In terms of biological role, component of the small ribosomal subunit. The ribosome is a large ribonucleoprotein complex responsible for the synthesis of proteins in the cell. Required for pre-rRNA processing and maturation of 40S ribosomal subunits. Part of the small subunit (SSU) processome, first precursor of the small eukaryotic ribosomal subunit. During the assembly of the SSU processome in the nucleolus, many ribosome biogenesis factors, an RNA chaperone and ribosomal proteins associate with the nascent pre-rRNA and work in concert to generate RNA folding, modifications, rearrangements and cleavage as well as targeted degradation of pre-ribosomal RNA by the RNA exosome. The polypeptide is Small ribosomal subunit protein eS19 (RPS19) (Pongo abelii (Sumatran orangutan)).